The sequence spans 273 residues: Probable branched-chain-amino-acid aminotransferase (273 aa).

At K133 the chain carries N6-(pyridoxal phosphate)lysine.

The protein belongs to the class-IV pyridoxal-phosphate-dependent aminotransferase family. Pyridoxal 5'-phosphate serves as cofactor.

The catalysed reaction is L-leucine + 2-oxoglutarate = 4-methyl-2-oxopentanoate + L-glutamate. It carries out the reaction L-isoleucine + 2-oxoglutarate = (S)-3-methyl-2-oxopentanoate + L-glutamate. The enzyme catalyses L-valine + 2-oxoglutarate = 3-methyl-2-oxobutanoate + L-glutamate. The protein operates within amino-acid biosynthesis; L-isoleucine biosynthesis; L-isoleucine from 2-oxobutanoate: step 4/4. It functions in the pathway amino-acid biosynthesis; L-leucine biosynthesis; L-leucine from 3-methyl-2-oxobutanoate: step 4/4. It participates in amino-acid biosynthesis; L-valine biosynthesis; L-valine from pyruvate: step 4/4. In terms of biological role, acts on leucine, isoleucine and valine. In Thermotoga maritima (strain ATCC 43589 / DSM 3109 / JCM 10099 / NBRC 100826 / MSB8), this protein is Probable branched-chain-amino-acid aminotransferase (ilvE).